Consider the following 231-residue polypeptide: Cytochrome c oxidase subunit 2 (231 aa).

Residues 1–30 are Mitochondrial intermembrane-facing; that stretch reads MNNFFQGYNLLFQHSLFASYMDWFHSFNCS. A helical transmembrane segment spans residues 31–52; that stretch reads LLLGVLVFVTLLFGYLIFGTFY. Residues 53–69 are Mitochondrial matrix-facing; that stretch reads FKSKKIEYQFGELLCSI. A helical transmembrane segment spans residues 70–89; it reads FPTIILLMQMVPSLSLLYYY. Residues 90 to 231 are Mitochondrial intermembrane-facing; the sequence is GLMNLDSNLT…FKSWCFGTME (142 aa). Residues H164, C199, E201, C203, H207, and M210 each coordinate Cu cation. Position 201 (E201) interacts with Mg(2+).

Belongs to the cytochrome c oxidase subunit 2 family. Component of the cytochrome c oxidase (complex IV, CIV), a multisubunit enzyme composed of a catalytic core of 3 subunits and several supernumerary subunits. The complex exists as a monomer or a dimer and forms supercomplexes (SCs) in the inner mitochondrial membrane with ubiquinol-cytochrome c oxidoreductase (cytochrome b-c1 complex, complex III, CIII). It depends on Cu cation as a cofactor.

It is found in the mitochondrion inner membrane. It catalyses the reaction 4 Fe(II)-[cytochrome c] + O2 + 8 H(+)(in) = 4 Fe(III)-[cytochrome c] + 2 H2O + 4 H(+)(out). Its function is as follows. Component of the cytochrome c oxidase, the last enzyme in the mitochondrial electron transport chain which drives oxidative phosphorylation. The respiratory chain contains 3 multisubunit complexes succinate dehydrogenase (complex II, CII), ubiquinol-cytochrome c oxidoreductase (cytochrome b-c1 complex, complex III, CIII) and cytochrome c oxidase (complex IV, CIV), that cooperate to transfer electrons derived from NADH and succinate to molecular oxygen, creating an electrochemical gradient over the inner membrane that drives transmembrane transport and the ATP synthase. Cytochrome c oxidase is the component of the respiratory chain that catalyzes the reduction of oxygen to water. Electrons originating from reduced cytochrome c in the intermembrane space (IMS) are transferred via the dinuclear copper A center (CU(A)) of subunit 2 and heme A of subunit 1 to the active site in subunit 1, a binuclear center (BNC) formed by heme A3 and copper B (CU(B)). The BNC reduces molecular oxygen to 2 water molecules using 4 electrons from cytochrome c in the IMS and 4 protons from the mitochondrial matrix. The sequence is that of Cytochrome c oxidase subunit 2 from Caenorhabditis elegans.